Consider the following 690-residue polypeptide: Potassium-transporting ATPase ATP-binding subunit (690 aa).

The tract at residues 1–23 (MNSTSTVRQPGGPRQQRRHTPKA) is disordered. Helical transmembrane passes span 44–64 (IMVKNPVMFMVWVGTLITGML), 78–98 (AMFNGLVTVILLFTVLFANFA), 233–253 (IALTVLLAVLTLVFLIVVATL), and 268–288 (LLIALLVALIPTTIGGLLSAI). The 4-aspartylphosphate intermediate role is filled by D321. ATP-binding positions include D358, E362, 389–396 (FSARTRMS), and K408. Mg(2+)-binding residues include D531 and D535. 3 consecutive transmembrane segments (helical) span residues 601–621 (FAIIPAMFAGIGIGALNIMDL), 627–647 (AVLSALIYNALIIPALIPLAL), and 665–685 (ILVYGLGGIIVPFVAIKLIDL).

Belongs to the cation transport ATPase (P-type) (TC 3.A.3) family. Type IA subfamily. In terms of assembly, the system is composed of three essential subunits: KdpA, KdpB and KdpC.

It localises to the cell inner membrane. It carries out the reaction K(+)(out) + ATP + H2O = K(+)(in) + ADP + phosphate + H(+). Part of the high-affinity ATP-driven potassium transport (or Kdp) system, which catalyzes the hydrolysis of ATP coupled with the electrogenic transport of potassium into the cytoplasm. This subunit is responsible for energy coupling to the transport system and for the release of the potassium ions to the cytoplasm. The sequence is that of Potassium-transporting ATPase ATP-binding subunit from Synechocystis sp. (strain ATCC 27184 / PCC 6803 / Kazusa).